Reading from the N-terminus, the 256-residue chain is 2-C-methyl-D-erythritol 4-phosphate cytidylyltransferase (256 aa).

This sequence belongs to the IspD/TarI cytidylyltransferase family. IspD subfamily.

The enzyme catalyses 2-C-methyl-D-erythritol 4-phosphate + CTP + H(+) = 4-CDP-2-C-methyl-D-erythritol + diphosphate. Its pathway is isoprenoid biosynthesis; isopentenyl diphosphate biosynthesis via DXP pathway; isopentenyl diphosphate from 1-deoxy-D-xylulose 5-phosphate: step 2/6. Its function is as follows. Catalyzes the formation of 4-diphosphocytidyl-2-C-methyl-D-erythritol from CTP and 2-C-methyl-D-erythritol 4-phosphate (MEP). The polypeptide is 2-C-methyl-D-erythritol 4-phosphate cytidylyltransferase (Corynebacterium glutamicum (strain ATCC 13032 / DSM 20300 / JCM 1318 / BCRC 11384 / CCUG 27702 / LMG 3730 / NBRC 12168 / NCIMB 10025 / NRRL B-2784 / 534)).